Reading from the N-terminus, the 451-residue chain is uncharacterized protein (451 aa).

One can recognise a TRAM domain in the interval 1–59 (MLKKNDIVEVEISDLSHDGAGIAKVDGLVFFVDNALPTEKIRMRVLKVKKNIAFGKVES). Residues Q283, Y312, E333, and D381 each contribute to the S-adenosyl-L-methionine site. C408 serves as the catalytic Nucleophile.

It belongs to the class I-like SAM-binding methyltransferase superfamily. RNA M5U methyltransferase family.

This is an uncharacterized protein from Streptococcus mutans serotype c (strain ATCC 700610 / UA159).